The primary structure comprises 99 residues: A-type ATP synthase subunit F (99 aa).

Belongs to the V-ATPase F subunit family. In terms of assembly, has multiple subunits with at least A(3), B(3), C, D, E, F, H, I and proteolipid K(x).

It localises to the cell membrane. Component of the A-type ATP synthase that produces ATP from ADP in the presence of a proton gradient across the membrane. The protein is A-type ATP synthase subunit F of Methanococcoides burtonii (strain DSM 6242 / NBRC 107633 / OCM 468 / ACE-M).